A 91-amino-acid polypeptide reads, in one-letter code: Sec-independent protein translocase protein TatA (91 aa).

Residues 2-22 form a helical membrane-spanning segment; that stretch reads ANLGFPELVLIAVVILVLFGW. Residues 43 to 55 show a composition bias toward basic and acidic residues; sequence VSEMKNDGAEAEK. Positions 43 to 91 are disordered; it reads VSEMKNDGAEAEKTSAASTKTDEITSVSSTDTPQPTVTVESKDEKKHPA. A compositionally biased stretch (polar residues) spans 57–81; that stretch reads SAASTKTDEITSVSSTDTPQPTVTV. A compositionally biased stretch (basic and acidic residues) spans 82–91; the sequence is ESKDEKKHPA.

The protein belongs to the TatA/E family. In terms of assembly, the Tat system comprises two distinct complexes: a TatABC complex, containing multiple copies of TatA, TatB and TatC subunits, and a separate TatA complex, containing only TatA subunits. Substrates initially bind to the TatABC complex, which probably triggers association of the separate TatA complex to form the active translocon.

Its subcellular location is the cell membrane. In terms of biological role, part of the twin-arginine translocation (Tat) system that transports large folded proteins containing a characteristic twin-arginine motif in their signal peptide across membranes. TatA could form the protein-conducting channel of the Tat system. The chain is Sec-independent protein translocase protein TatA from Corynebacterium kroppenstedtii (strain DSM 44385 / JCM 11950 / CIP 105744 / CCUG 35717).